The following is a 175-amino-acid chain: QLTLALIKPDAVAHPLILEAVHQQILSNKFLIVRMRELLWKPEDCRRFYREHEGRFFYQRLVEFMTSGPIRAYILAHKDAIQLWRTLMGPTRVFRARHIAPDSIRGSLGLTDTRNTTHGSDSVVSASREIAAFFPDFSEQRWYEEEEPQLRCGPVHYSPEEGIHCAAETGGPKPA.

Residues K8, F57, R85, T91, R105, and N115 each coordinate ATP. The Pros-phosphohistidine intermediate role is filled by H118.

The protein belongs to the NDK family. Mg(2+) is required as a cofactor.

The enzyme catalyses a 2'-deoxyribonucleoside 5'-diphosphate + ATP = a 2'-deoxyribonucleoside 5'-triphosphate + ADP. The catalysed reaction is a ribonucleoside 5'-diphosphate + ATP = a ribonucleoside 5'-triphosphate + ADP. In terms of biological role, major role in the synthesis of nucleoside triphosphates other than ATP. The ATP gamma phosphate is transferred to the NDP beta phosphate via a ping-pong mechanism, using a phosphorylated active-site intermediate. The chain is Nucleoside diphosphate kinase 6 (Nme6) from Rattus norvegicus (Rat).